Reading from the N-terminus, the 442-residue chain is Chaperone protein dnaJ A6, chloroplastic (442 aa).

A chloroplast-targeting transit peptide spans 1–82; that stretch reads MAIIQLGSTC…PRRGSRFTVR (82 aa). In terms of domain architecture, J spans 86–150; sequence DYYSVLGVSK…EKKSLYDRYG (65 aa). Residues 211-292 form a CR-type zinc finger; that stretch reads GMEKEIEISR…CSGDGRVRKT (82 aa). Zn(2+) contacts are provided by C224, C227, C241, C244, C267, C270, C280, and C283. CXXCXGXG motif repeat units lie at residues 224–231, 241–248, 267–274, and 280–287; these read CGTCEGSG, CTTCGGQG, CSSCNGTG, and CGTCSGDG.

It belongs to the DnaJ family.

It localises to the plastid. Its subcellular location is the chloroplast. Functionally, may function together with HSC70 chaperone to assist protein folding and prevent protein aggregation during heat stress in the chloroplast. This chain is Chaperone protein dnaJ A6, chloroplastic, found in Arabidopsis thaliana (Mouse-ear cress).